The sequence spans 246 residues: Proteolipid protein DM gamma (246 aa).

The next 4 helical transmembrane spans lie at 19-35 (LLATILCFSGVALFCGC), 71-87 (VIYGVASFSFLYGIILL), 118-134 (VFLTYLLGIAWLGVFGF), and 206-222 (FIVACAGAGATVIALLI).

Belongs to the myelin proteolipid protein family. Highly expressed in white matter in myelinating shark brain.

The protein resides in the membrane. The protein is Proteolipid protein DM gamma of Squalus acanthias (Spiny dogfish).